The chain runs to 246 residues: E3 ubiquitin-protein ligase MARCHF2 (246 aa).

The segment at Gly56–Glu116 adopts an RING-CH-type zinc-finger fold. Residues Cys64, Cys67, Cys80, Cys82, His90, Cys93, Cys106, and Cys109 each contribute to the Zn(2+) site. 2 helical membrane-spanning segments follow: residues Leu138–Leu158 and Ala175–Val195.

Its subcellular location is the endoplasmic reticulum membrane. It is found in the lysosome membrane. It localises to the endosome membrane. It carries out the reaction S-ubiquitinyl-[E2 ubiquitin-conjugating enzyme]-L-cysteine + [acceptor protein]-L-lysine = [E2 ubiquitin-conjugating enzyme]-L-cysteine + N(6)-ubiquitinyl-[acceptor protein]-L-lysine.. The protein operates within protein modification; protein ubiquitination. Functionally, E3 ubiquitin-protein ligase which may be involved in endosomal trafficking. E3 ubiquitin ligases accept ubiquitin from an E2 ubiquitin-conjugating enzyme in the form of a thioester and then directly transfer the ubiquitin to targeted substrates. The protein is E3 ubiquitin-protein ligase MARCHF2 (marchf2) of Xenopus tropicalis (Western clawed frog).